Consider the following 390-residue polypeptide: Acid protease (390 aa).

A signal peptide spans 1–18 (MLFSKSLLLSVLASLSFA). Residues 75-386 (YLTTIEIGTP…DIDNSQVGIA (312 aa)) enclose the Peptidase A1 domain. Residues D93 and D282 contribute to the active site.

It belongs to the peptidase A1 family.

This is Acid protease (PEP1) from Saccharomycopsis fibuligera (Yeast).